The sequence spans 299 residues: ATP phosphoribosyltransferase (299 aa).

It belongs to the ATP phosphoribosyltransferase family. Long subfamily. Mg(2+) is required as a cofactor.

The protein localises to the cytoplasm. The catalysed reaction is 1-(5-phospho-beta-D-ribosyl)-ATP + diphosphate = 5-phospho-alpha-D-ribose 1-diphosphate + ATP. It functions in the pathway amino-acid biosynthesis; L-histidine biosynthesis; L-histidine from 5-phospho-alpha-D-ribose 1-diphosphate: step 1/9. Feedback inhibited by histidine. Catalyzes the condensation of ATP and 5-phosphoribose 1-diphosphate to form N'-(5'-phosphoribosyl)-ATP (PR-ATP). Has a crucial role in the pathway because the rate of histidine biosynthesis seems to be controlled primarily by regulation of HisG enzymatic activity. This Shewanella sp. (strain ANA-3) protein is ATP phosphoribosyltransferase.